The sequence spans 336 residues: MAHSLQTLHTFALTSQCQQFVKINNLEQLKTQSFKPPFCLLGEGSNTVFLNDYTGTVIKMATQGVQIKERANDYLISVAAGENWHQLVSELLAKNIPGLENLALIPGTVGAAPVQNIGAYGVELAKFVESVEYFDIANKTFNTLNNAQCEFGYRDSIFKHALKNKAVITTVHLALPKEWQPVLSYGPLQQLAAVTPQAVFEQVIATRNSKLPNPYTLPNAGSFFKNPIITNQCLAALLTTFADLPHYKYGAKHHKVAAGWLIEQAGLKGYRIAGIEVHKQQALVLVNYGQSQGSDLIAMIKHIQHSVFSRYNIMLEHEVRLINNNSECHITAEPTP.

The 178-residue stretch at Met-1–Glu-178 folds into the FAD-binding PCMH-type domain. The active site involves Arg-154. Ser-222 functions as the Proton donor in the catalytic mechanism. The active site involves Glu-318.

This sequence belongs to the MurB family. It depends on FAD as a cofactor.

Its subcellular location is the cytoplasm. The enzyme catalyses UDP-N-acetyl-alpha-D-muramate + NADP(+) = UDP-N-acetyl-3-O-(1-carboxyvinyl)-alpha-D-glucosamine + NADPH + H(+). It participates in cell wall biogenesis; peptidoglycan biosynthesis. Cell wall formation. This Pseudoalteromonas translucida (strain TAC 125) protein is UDP-N-acetylenolpyruvoylglucosamine reductase.